We begin with the raw amino-acid sequence, 414 residues long: Cytochrome c biogenesis protein Ccs1 (414 aa).

A run of 3 helical transmembrane segments spans residues 14 to 34 (LTVA…GTVI), 73 to 93 (SWWF…CTIT), and 159 to 179 (VSPI…MLST).

Belongs to the Ccs1/CcsB family. In terms of assembly, may interact with CcsA.

The protein resides in the plastid. Its subcellular location is the chloroplast thylakoid membrane. Its function is as follows. Required during biogenesis of c-type cytochromes (cytochrome c6 and cytochrome f) at the step of heme attachment. This is Cytochrome c biogenesis protein Ccs1 from Guillardia theta (Cryptophyte).